The following is a 336-amino-acid chain: Protein-lysine N-methyltransferase EFM3 (336 aa).

Residues Trp147, 173 to 175 (GTG), Asp196, Leu232, and Ala251 each bind S-adenosyl-L-methionine.

Belongs to the class I-like SAM-binding methyltransferase superfamily. EEF2KMT family.

The protein localises to the cytoplasm. S-adenosyl-L-methionine-dependent protein-lysine N-methyltransferase that methylates elongation factor 2. This Chaetomium thermophilum (strain DSM 1495 / CBS 144.50 / IMI 039719) (Thermochaetoides thermophila) protein is Protein-lysine N-methyltransferase EFM3.